A 223-amino-acid polypeptide reads, in one-letter code: Lipoprotein signal peptidase (223 aa).

The disordered stretch occupies residues 1-20 (MNSAKVNPSGHAPTPAPTAS). The next 4 helical transmembrane spans lie at 32-52 (LFFG…EAIF), 65-85 (WIIE…VFGL), 91-111 (LVFA…LFFF), and 116-136 (SCWL…NLYD). Catalysis depends on residues aspartate 156 and aspartate 175. Residues 173–193 (IADSLLVTGAIMLLVQSFFFP) form a helical membrane-spanning segment. Residues 196-223 (PHGEADGNELPGRRAPDEPTEGTKPAAS) are disordered.

It belongs to the peptidase A8 family.

The protein localises to the cell inner membrane. The catalysed reaction is Release of signal peptides from bacterial membrane prolipoproteins. Hydrolyzes -Xaa-Yaa-Zaa-|-(S,diacylglyceryl)Cys-, in which Xaa is hydrophobic (preferably Leu), and Yaa (Ala or Ser) and Zaa (Gly or Ala) have small, neutral side chains.. The protein operates within protein modification; lipoprotein biosynthesis (signal peptide cleavage). In terms of biological role, this protein specifically catalyzes the removal of signal peptides from prolipoproteins. This chain is Lipoprotein signal peptidase, found in Rhodopirellula baltica (strain DSM 10527 / NCIMB 13988 / SH1).